Here is a 284-residue protein sequence, read N- to C-terminus: Diaminopimelate epimerase (284 aa).

Substrate-binding residues include N20, Q53, and N73. Residue C82 is the Proton donor of the active site. Substrate contacts are provided by residues 83 to 84 (GN), N167, N200, and 218 to 219 (ER). Catalysis depends on C227, which acts as the Proton acceptor. 228 to 229 (GS) contributes to the substrate binding site.

The protein belongs to the diaminopimelate epimerase family. Homodimer.

It is found in the cytoplasm. The catalysed reaction is (2S,6S)-2,6-diaminopimelate = meso-2,6-diaminopimelate. It functions in the pathway amino-acid biosynthesis; L-lysine biosynthesis via DAP pathway; DL-2,6-diaminopimelate from LL-2,6-diaminopimelate: step 1/1. In terms of biological role, catalyzes the stereoinversion of LL-2,6-diaminopimelate (L,L-DAP) to meso-diaminopimelate (meso-DAP), a precursor of L-lysine and an essential component of the bacterial peptidoglycan. This is Diaminopimelate epimerase from Xanthomonas oryzae pv. oryzae (strain MAFF 311018).